Reading from the N-terminus, the 139-residue chain is Small ribosomal subunit protein uS12m (139 aa).

A mitochondrion-targeting transit peptide spans 1-29 (MSWSGLLRGLSMSLNYGLALAPRPWGTRP). A disordered region spans residues 37 to 57 (HRRGPPKFPPSKPGPTEGRPQ).

It belongs to the universal ribosomal protein uS12 family. As to quaternary structure, component of the mitochondrial ribosome small subunit (28S) which comprises a 12S rRNA and about 30 distinct proteins.

The protein resides in the mitochondrion. The protein is Small ribosomal subunit protein uS12m (MRPS12) of Bos taurus (Bovine).